Consider the following 319-residue polypeptide: Probable ABC transporter permease protein MG189 homolog (319 aa).

The next 6 helical transmembrane spans lie at 41-61 (VVLC…LVVA), 98-118 (AIWI…FFTV), 134-154 (LFWF…LIGQ), 169-189 (PAII…GFMF), 229-249 (TVSI…LLLL), and 282-302 (NLKM…YFLF). One can recognise an ABC transmembrane type-1 domain in the interval 99-302 (IWINSLVTIL…LPMFIVYFLF (204 aa)).

Belongs to the binding-protein-dependent transport system permease family. MalFG subfamily.

Its subcellular location is the cell membrane. Functionally, probably part of a binding-protein-dependent transport system. Probably responsible for the translocation of the substrate across the membrane. This chain is Probable ABC transporter permease protein MG189 homolog, found in Mycoplasma pneumoniae (strain ATCC 29342 / M129 / Subtype 1) (Mycoplasmoides pneumoniae).